Here is an 89-residue protein sequence, read N- to C-terminus: Cell division topological specificity factor (89 aa).

This sequence belongs to the MinE family.

Its function is as follows. Prevents the cell division inhibition by proteins MinC and MinD at internal division sites while permitting inhibition at polar sites. This ensures cell division at the proper site by restricting the formation of a division septum at the midpoint of the long axis of the cell. The polypeptide is Cell division topological specificity factor (Proteus mirabilis (strain HI4320)).